A 208-amino-acid chain; its full sequence is Large ribosomal subunit protein bL25 (208 aa).

The protein belongs to the bacterial ribosomal protein bL25 family. CTC subfamily. As to quaternary structure, part of the 50S ribosomal subunit; part of the 5S rRNA/L5/L18/L25 subcomplex. Contacts the 5S rRNA. Binds to the 5S rRNA independently of L5 and L18.

Its function is as follows. This is one of the proteins that binds to the 5S RNA in the ribosome where it forms part of the central protuberance. This chain is Large ribosomal subunit protein bL25, found in Acidovorax ebreus (strain TPSY) (Diaphorobacter sp. (strain TPSY)).